Here is a 366-residue protein sequence, read N- to C-terminus: tRNA/tmRNA (uracil-C(5))-methyltransferase (366 aa).

Residues Q190, Y218, N223, E239, and D299 each contribute to the S-adenosyl-L-methionine site. Catalysis depends on C324, which acts as the Nucleophile. The active-site Proton acceptor is E358.

It belongs to the class I-like SAM-binding methyltransferase superfamily. RNA M5U methyltransferase family. TrmA subfamily.

The enzyme catalyses uridine(54) in tRNA + S-adenosyl-L-methionine = 5-methyluridine(54) in tRNA + S-adenosyl-L-homocysteine + H(+). It catalyses the reaction uridine(341) in tmRNA + S-adenosyl-L-methionine = 5-methyluridine(341) in tmRNA + S-adenosyl-L-homocysteine + H(+). In terms of biological role, dual-specificity methyltransferase that catalyzes the formation of 5-methyluridine at position 54 (m5U54) in all tRNAs, and that of position 341 (m5U341) in tmRNA (transfer-mRNA). This chain is tRNA/tmRNA (uracil-C(5))-methyltransferase, found in Escherichia coli O17:K52:H18 (strain UMN026 / ExPEC).